Here is a 570-residue protein sequence, read N- to C-terminus: D-xylulose kinase A (570 aa).

Residues His-95, Arg-166, Asp-282, and Asn-283 each contribute to the substrate site. Residues Trp-364, 469–470, and Asn-473 contribute to the ATP site; that span reads GG.

This sequence belongs to the FGGY kinase family.

Its subcellular location is the cytoplasm. The catalysed reaction is D-xylulose + ATP = D-xylulose 5-phosphate + ADP + H(+). Its function is as follows. Highly specific D-xylulose kinase which participates in the catabolism of xylose. Xylose is a major component of hemicelluloses such as xylan. Most fungi utilize D-xylose via three enzymatic reactions, xylose reductase (XR), xylitol dehydrogenase (XDH), and xylulokinase, to form xylulose 5-phosphate, which enters pentose phosphate pathway. The chain is D-xylulose kinase A (xkiA) from Aspergillus niger.